The primary structure comprises 535 residues: CTP synthase (535 aa).

An amidoligase domain region spans residues 1 to 270; it reads MSKNTKYVFV…DRLVCEKLGL (270 aa). Residue S16 participates in CTP binding. Residue S16 coordinates UTP. 17 to 22 lines the ATP pocket; it reads SLGKGI. Residue Y57 participates in L-glutamine binding. An ATP-binding site is contributed by D74. Residues D74 and E144 each contribute to the Mg(2+) site. CTP-binding positions include 151-153, 191-196, and K227; these read DIE and KTKPTQ. UTP contacts are provided by residues 191–196 and K227; that span reads KTKPTQ. One can recognise a Glutamine amidotransferase type-1 domain in the interval 295–535; that stretch reads KIALVGKYVE…GFVGAALNNK (241 aa). Residue G357 coordinates L-glutamine. C384 (nucleophile; for glutamine hydrolysis) is an active-site residue. Residues 385-388, E408, and R465 contribute to the L-glutamine site; that span reads LGMQ. Catalysis depends on residues H510 and E512.

The protein belongs to the CTP synthase family. Homotetramer.

It carries out the reaction UTP + L-glutamine + ATP + H2O = CTP + L-glutamate + ADP + phosphate + 2 H(+). It catalyses the reaction L-glutamine + H2O = L-glutamate + NH4(+). The catalysed reaction is UTP + NH4(+) + ATP = CTP + ADP + phosphate + 2 H(+). The protein operates within pyrimidine metabolism; CTP biosynthesis via de novo pathway; CTP from UDP: step 2/2. Its activity is regulated as follows. Allosterically activated by GTP, when glutamine is the substrate; GTP has no effect on the reaction when ammonia is the substrate. The allosteric effector GTP functions by stabilizing the protein conformation that binds the tetrahedral intermediate(s) formed during glutamine hydrolysis. Inhibited by the product CTP, via allosteric rather than competitive inhibition. In terms of biological role, catalyzes the ATP-dependent amination of UTP to CTP with either L-glutamine or ammonia as the source of nitrogen. Regulates intracellular CTP levels through interactions with the four ribonucleotide triphosphates. In Clostridium perfringens (strain ATCC 13124 / DSM 756 / JCM 1290 / NCIMB 6125 / NCTC 8237 / Type A), this protein is CTP synthase.